Here is a 495-residue protein sequence, read N- to C-terminus: Angiopoietin-2 (495 aa).

An N-terminal signal peptide occupies residues 1-18 (MWQIVFFTLSCDLVRAAA). Asparagine 88, asparagine 118, asparagine 132, asparagine 150, asparagine 239, and asparagine 303 each carry an N-linked (GlcNAc...) asparagine glycan. The stretch at 165-247 (STNKLEKQIL…VNNSVLQKQQ (83 aa)) forms a coiled coil. Residues 274–494 (KEEQIIYRDC…GTTMMIRPAD (221 aa)) enclose the Fibrinogen C-terminal domain. A disulfide bridge links cysteine 283 with cysteine 312. Positions 428, 430, 432, and 434 each coordinate Ca(2+). Disulfide bonds link cysteine 432-cysteine 434 and cysteine 436-cysteine 449.

Interacts with TEK/TIE2, competing for the same binding site as ANGPT1. Interacts with ITGA5. Interacts with SVEP1/polydom. Interacts with THBD; this interaction significantly inhibits the generation of activated PC and TAFIa/CPB2 by the thrombin/thrombomodulin complex.

It is found in the secreted. Binds to TEK/TIE2, competing for the ANGPT1 binding site, and modulating ANGPT1 signaling. Can induce tyrosine phosphorylation of TEK/TIE2 in the absence of ANGPT1. In the absence of angiogenic inducers, such as VEGF, ANGPT2-mediated loosening of cell-matrix contacts may induce endothelial cell apoptosis with consequent vascular regression. In concert with VEGF, it may facilitate endothelial cell migration and proliferation, thus serving as a permissive angiogenic signal. Involved in the regulation of lymphangiogenesis. The protein is Angiopoietin-2 (ANGPT2) of Canis lupus familiaris (Dog).